The sequence spans 132 residues: Small ribosomal subunit protein uS8 (132 aa).

It belongs to the universal ribosomal protein uS8 family. Part of the 30S ribosomal subunit. Contacts proteins S5 and S12.

Its function is as follows. One of the primary rRNA binding proteins, it binds directly to 16S rRNA central domain where it helps coordinate assembly of the platform of the 30S subunit. This Paenarthrobacter aurescens (strain TC1) protein is Small ribosomal subunit protein uS8.